The chain runs to 1880 residues: Nonribosomal peptide synthetase otaB (1880 aa).

The segment at 205–594 (AQAVERGNSI…SVSFVGRRQA (390 aa)) is adenylation 1. One can recognise a Carrier domain in the interval 728 to 804 (LPLSPLERQI…ELGAHLEQEA (77 aa)). Position 765 is an O-(pantetheine 4'-phosphoryl)serine (S765). Residues 840–1250 (EDVYPCTALQ…LLSPQDQQQL (411 aa)) form a condensation region. Residues 1269-1665 (QRQCLAHPQK…GRKDRQVKLR (397 aa)) form an adenylation 2 region.

It belongs to the NRP synthetase family.

It carries out the reaction 7-carboxymellein + L-phenylalanine + ATP = ochratoxin B + ADP + phosphate + H(+). The protein operates within mycotoxin biosynthesis. Nonribosomal peptide synthetase; part of the gene cluster that mediates the biosynthesis of ochratoxin A (OTA), a mycotoxin composed of a chlorinated type I polyketide dihydroisocoumarin moiety linked to L-phenylalanine, and demonstrated to have nephrotoxic, immunotoxic, genotoxic, neurotoxic, and teratogenic properties. OtaB is responsible for the linking of phenylalanine to the dihydroisocoumarin ring. The pathway begins with the highly reducing polyketide synthase otaA that catalyzes the formation of the isocoumarin group during the initial stages of biosynthesis, starting from one acetate and 4 malonate units, to originate the characteristic pentaketide skeleton 7-methylmellein (7-MM) of the OTA molecule. The newly identified cyclase otaY might be involved in the polyketide cyclization reaction during the initial steps of the OTA biosynthesis. 7-MM is then oxidized into 7-carboxymellein (also called ochratoxin beta) by the cytochrome P450 monooxygenase otaC. The NRPS encoded by the otaB gene is involved in the linking of phenylalanine to the dihydroisocoumarin ring. The reaction catalyzed by NRPS results in the production of ochratoxin B (OTB), which is the non-chlorinated analog of OTA and which subsequently serves as the substrate of the halogenase otaD for chlorination activity to form the final molecular structure of OTA, containing a chlorine atom in the C-5 position of the molecule. This is Nonribosomal peptide synthetase otaB from Aspergillus niger (strain ATCC MYA-4892 / CBS 513.88 / FGSC A1513).